A 231-amino-acid chain; its full sequence is Ribonuclease P protein component 3 (231 aa).

This sequence belongs to the eukaryotic/archaeal RNase P protein component 3 family. As to quaternary structure, consists of a catalytic RNA component and at least 4-5 protein subunits.

It localises to the cytoplasm. The catalysed reaction is Endonucleolytic cleavage of RNA, removing 5'-extranucleotides from tRNA precursor.. Functionally, part of ribonuclease P, a protein complex that generates mature tRNA molecules by cleaving their 5'-ends. The protein is Ribonuclease P protein component 3 of Methanococcus maripaludis (strain C5 / ATCC BAA-1333).